We begin with the raw amino-acid sequence, 353 residues long: Uroporphyrinogen decarboxylase (353 aa).

Residues 27–31, Phe46, Asp76, Tyr152, Ser207, and His321 contribute to the substrate site; that span reads RQAGR.

Belongs to the uroporphyrinogen decarboxylase family. In terms of assembly, homodimer.

The protein resides in the cytoplasm. It catalyses the reaction uroporphyrinogen III + 4 H(+) = coproporphyrinogen III + 4 CO2. It functions in the pathway porphyrin-containing compound metabolism; protoporphyrin-IX biosynthesis; coproporphyrinogen-III from 5-aminolevulinate: step 4/4. In terms of biological role, catalyzes the decarboxylation of four acetate groups of uroporphyrinogen-III to yield coproporphyrinogen-III. In Listeria monocytogenes serovar 1/2a (strain ATCC BAA-679 / EGD-e), this protein is Uroporphyrinogen decarboxylase.